A 227-amino-acid polypeptide reads, in one-letter code: Thymidylate kinase (227 aa).

ATP is bound at residue 16–23; the sequence is GIDGAGKT.

The protein belongs to the thymidylate kinase family.

The catalysed reaction is dTMP + ATP = dTDP + ADP. Its function is as follows. Phosphorylation of dTMP to form dTDP in both de novo and salvage pathways of dTTP synthesis. The polypeptide is Thymidylate kinase (Xanthomonas campestris pv. campestris (strain 8004)).